Here is a 379-residue protein sequence, read N- to C-terminus: Transcription factor TIP2 (379 aa).

A disordered region spans residues 144–184; sequence MVGPFESSPTPRSGGGRKRSRATAGFHGGGPANGVEKKEKQ. Positions 173 to 186 are basic motif; degenerate; that stretch reads GPANGVEKKEKQRR. A bHLH domain is found at 173–222; sequence GPANGVEKKEKQRRLRLTEKYNALMLLIPNRTKEDRATVISDAIEYIQEL. Residues 187–222 are helix-loop-helix motif; it reads LRLTEKYNALMLLIPNRTKEDRATVISDAIEYIQEL.

This sequence belongs to the bHLH protein family. As to quaternary structure, homodimer. Interacts with TDR, but not with EAT1. As to expression, highly expressed in anthers; strong expression in the middle layer and tapetum, and weak expression in the endothecium.

It localises to the nucleus. Functionally, transcription factor that binds to the E-box-containing promoter regions of the transcription factors TDR and EAT1, activating their expression. May have a role in specifying the cell pattern of the inner anther walls and functioning in meiosis progression. Required for male reproduction. Acts downstream of UDT1 and GAMYB, but upstream of TDR1 and EAT1 in pollen development. The protein is Transcription factor TIP2 (TIP2) of Oryza sativa subsp. japonica (Rice).